Consider the following 85-residue polypeptide: Glutaredoxin 1 (85 aa).

Residues 1–85 (MQTVIFGRSG…AAWVKENLDA (85 aa)) form the Glutaredoxin domain. Residues cysteine 11 and cysteine 14 are joined by a disulfide bond.

It belongs to the glutaredoxin family. As to quaternary structure, monomer.

Its function is as follows. The disulfide bond functions as an electron carrier in the glutathione-dependent synthesis of deoxyribonucleotides by the enzyme ribonucleotide reductase. In addition, it is also involved in reducing some disulfides in a coupled system with glutathione reductase. The polypeptide is Glutaredoxin 1 (grxA) (Shigella flexneri).